A 191-amino-acid polypeptide reads, in one-letter code: MFTKTAIELIKELRGTDSIPHYNDTSIKATIDEMIALYEDLIKTITEHKEQKKEPFYLQHAITFHNSINRDKRCILAYLNERLNRIKEYRWSSGQSLLPDQLKERLSQNEIQFFSEYDKILTEYNSKVGLDLTIDPQPPKELYIEVRVIKELGEVVLNSGCTVNLNLNTTHFLKRSDITNLVKNGSLEHII.

It belongs to the GINS1/PSF1 family. As to quaternary structure, component of the GINS complex which is a heterotetramer of gins1, gins2, gins3 and gins4.

It is found in the nucleus. In terms of biological role, the GINS complex plays an essential role in the initiation of DNA replication. The polypeptide is Probable DNA replication complex GINS protein PSF1 (gins1) (Dictyostelium discoideum (Social amoeba)).